A 291-amino-acid chain; its full sequence is GTP-binding protein RHO4 (291 aa).

Positions 14-31 (GNESNIVSQGSPSSSNLP) are enriched in polar residues. The tract at residues 14 to 45 (GNESNIVSQGSPSSSNLPESPGTLDEKNLPRL) is disordered. 79–86 (GDGAVGKT) serves as a coordination point for GTP. An Effector region motif is present at residues 101-109 (YIPTIFENY). GTP-binding positions include 127-131 (DTAGQ) and 185-188 (LKSD). The tract at residues 250 to 273 (THTIKNPFKRNTTRSDIDSSTGDT) is disordered. 3 positions are modified to phosphoserine: serine 264, serine 268, and serine 276. At cysteine 288 the chain carries Cysteine methyl ester. Cysteine 288 carries S-farnesyl cysteine lipidation. Residues 289–291 (IIM) constitute a propeptide, removed in mature form.

Belongs to the small GTPase superfamily. Rho family. As to quaternary structure, interacts with BEM4.

The protein localises to the cell membrane. The enzyme catalyses GTP + H2O = GDP + phosphate + H(+). Plays an important role in cell growth. Required to keep the uninucleated state. May be involved in the organization of the cytoskeleton which affects microtubule functions. Most likely RHO3 and RHO4 of S.cerevisiae regulate partially overlapping but different pathways. This Saccharomyces cerevisiae (strain ATCC 204508 / S288c) (Baker's yeast) protein is GTP-binding protein RHO4 (RHO4).